The sequence spans 236 residues: Apoptosis regulator Bcl-2 (236 aa).

A BH4 motif is present at residues 10–30; the sequence is DNREIVMKYIHYKLSQRGYEW. Thr-69 is modified (phosphothreonine; by MAPK8). Ser-70 is modified (phosphoserine; by MAPK8 and PKC). Residue Ser-84 is modified to Phosphoserine; by MAPK8. The BH3 motif lies at 90–104; it reads VHLTLRRAGDDFSRR. The short motif at 133–152 is the BH1 element; it reads ELFRDGVNWGRIVAFFEFGG. Residues 184 to 199 carry the BH2 motif; it reads TWIQDNGGWDAFVELY. A helical transmembrane segment spans residues 209 to 230; the sequence is FSWLSLKALLSLALVGACITLG.

Belongs to the Bcl-2 family. Forms homodimers, and heterodimers with BAX, BAD, BAK and Bcl-X(L). Heterodimerization with BAX requires intact BH1 and BH2 motifs, and is necessary for anti-apoptotic activity. Component of the complex, at least composed of LRPPRC, BECN1 and BCL2; the interactions prevent BECN1 from forming an autophagy-inducing complex with PIK3C3. Interacts with EI24. Also interacts with APAF1, BBC3, BCL2L1, BNIPL, MRPL41 and TP53BP2. Binding to FKBP8 seems to target BCL2 to the mitochondria and probably interferes with the binding of BCL2 to its targets. Interacts with BAG1 in an ATP-dependent manner. Interacts with RAF1 (the 'Ser-338' and 'Ser-339' phosphorylated form). Interacts (via the BH4 domain) with EGLN3; the interaction prevents the formation of the BAX-BCL2 complex and inhibits the anti-apoptotic activity of BCL2. Interacts with G0S2; this interaction also prevents the formation of the anti-apoptotic BAX-BCL2 complex. Interacts with RTL10/BOP. Interacts with the SCF(FBXO10) complex. Interacts (via the loop between motifs BH4 and BH3) with NLRP1 (via LRR repeats), but not with NLRP2, NLRP3, NLRP4, PYCARD, nor MEFV. Interacts with GIMAP3/IAN4, GIMAP4/IAN1 and GIMAP5/IAN5. Interacts with BCAP31. Interacts with IRF3; the interaction is inhibited by Sendai virus infection. Interacts with BECN1; thereby inhibiting autophagy in non-starvation conditions. Interacts with AMBRA1; thereby inhibiting autophagy. Post-translationally, phosphorylation/dephosphorylation on Ser-70 regulates anti-apoptotic activity. Growth factor-stimulated phosphorylation on Ser-70 by PKC is required for the anti-apoptosis activity and occurs during the G2/M phase of the cell cycle. In the absence of growth factors, BCL2 appears to be phosphorylated by other protein kinases such as ERKs and stress-activated kinases. Phosphorylated by MAPK8/JNK1 at Thr-69, Ser-70 and Ser-84, which stimulates starvation-induced autophagy. Dephosphorylated by protein phosphatase 2A (PP2A). In terms of processing, proteolytically cleaved by caspases during apoptosis. The cleaved protein, lacking the BH4 motif, has pro-apoptotic activity, causes the release of cytochrome c into the cytosol promoting further caspase activity. Monoubiquitinated by PRKN, leading to an increase in its stability. Ubiquitinated by SCF(FBXO10), leading to its degradation by the proteasome.

Its subcellular location is the mitochondrion outer membrane. It localises to the nucleus membrane. The protein resides in the endoplasmic reticulum membrane. The protein localises to the cytoplasm. In terms of biological role, suppresses apoptosis in a variety of cell systems including factor-dependent lymphohematopoietic and neural cells. Regulates cell death by controlling the mitochondrial membrane permeability. Appears to function in a feedback loop system with caspases. Inhibits caspase activity either by preventing the release of cytochrome c from the mitochondria and/or by binding to the apoptosis-activating factor (APAF-1). Also acts as an inhibitor of autophagy: interacts with BECN1 and AMBRA1 during non-starvation conditions and inhibits their autophagy function. May attenuate inflammation by impairing NLRP1-inflammasome activation, hence CASP1 activation and IL1B release. This Canis lupus familiaris (Dog) protein is Apoptosis regulator Bcl-2 (BCL2).